We begin with the raw amino-acid sequence, 191 residues long: Elongation factor P (191 aa).

An N6-(3,6-diaminohexanoyl)-5-hydroxylysine modification is found at K34.

Belongs to the elongation factor P family. May be beta-lysylated on the epsilon-amino group of Lys-34 by the combined action of EpmA and EpmB, and then hydroxylated on the C5 position of the same residue by EpmC (if this protein is present). Lysylation is critical for the stimulatory effect of EF-P on peptide-bond formation. The lysylation moiety may extend toward the peptidyltransferase center and stabilize the terminal 3-CCA end of the tRNA. Hydroxylation of the C5 position on Lys-34 may allow additional potential stabilizing hydrogen-bond interactions with the P-tRNA.

The protein localises to the cytoplasm. Its pathway is protein biosynthesis; polypeptide chain elongation. In terms of biological role, involved in peptide bond synthesis. Alleviates ribosome stalling that occurs when 3 or more consecutive Pro residues or the sequence PPG is present in a protein, possibly by augmenting the peptidyl transferase activity of the ribosome. Modification of Lys-34 is required for alleviation. This Marinomonas sp. (strain MWYL1) protein is Elongation factor P.